Consider the following 398-residue polypeptide: Serine/threonine-protein kinase ppk23 (398 aa).

The Protein kinase domain maps to 74–359; that stretch reads YEILEKIEEG…AKEALEHPYF (286 aa). Residues 80–88 and Lys103 each bind ATP; that span reads IEEGSYGIV. Asp198 (proton acceptor) is an active-site residue. Residues 359-398 form a disordered region; that stretch reads FYESPRPKDPKFFPTFPSKAKGESKEKNVFQSFRSASPKK. Residues 387 to 398 are compositionally biased toward polar residues; the sequence is VFQSFRSASPKK.

This sequence belongs to the protein kinase superfamily. Ser/Thr protein kinase family.

It is found in the nucleus. It catalyses the reaction L-seryl-[protein] + ATP = O-phospho-L-seryl-[protein] + ADP + H(+). The catalysed reaction is L-threonyl-[protein] + ATP = O-phospho-L-threonyl-[protein] + ADP + H(+). This Schizosaccharomyces pombe (strain 972 / ATCC 24843) (Fission yeast) protein is Serine/threonine-protein kinase ppk23 (ppk23).